Here is a 238-residue protein sequence, read N- to C-terminus: Large ribosomal subunit protein bL17m (238 aa).

The protein belongs to the bacterial ribosomal protein bL17 family. In terms of assembly, component of the mitochondrial large ribosomal subunit (mt-LSU). Mature yeast 74S mitochondrial ribosomes consist of a small (37S) and a large (54S) subunit. The 37S small subunit contains a 15S ribosomal RNA (15S mt-rRNA) and 34 different proteins. The 54S large subunit contains a 21S rRNA (21S mt-rRNA) and 46 different proteins.

It localises to the mitochondrion. Component of the mitochondrial ribosome (mitoribosome), a dedicated translation machinery responsible for the synthesis of mitochondrial genome-encoded proteins, including at least some of the essential transmembrane subunits of the mitochondrial respiratory chain. The mitoribosomes are attached to the mitochondrial inner membrane and translation products are cotranslationally integrated into the membrane. This Saccharomyces cerevisiae (strain ATCC 204508 / S288c) (Baker's yeast) protein is Large ribosomal subunit protein bL17m (MRPL8).